Reading from the N-terminus, the 348-residue chain is A-type ATP synthase subunit C (348 aa).

This sequence belongs to the V-ATPase V0D/AC39 subunit family. In terms of assembly, has multiple subunits with at least A(3), B(3), C, D, E, F, H, I and proteolipid K(x).

It is found in the cell membrane. Component of the A-type ATP synthase that produces ATP from ADP in the presence of a proton gradient across the membrane. This chain is A-type ATP synthase subunit C, found in Halorubrum lacusprofundi (strain ATCC 49239 / DSM 5036 / JCM 8891 / ACAM 34).